We begin with the raw amino-acid sequence, 284 residues long: MGRKKKSRASTTEEDEIEMDNAGPSSETSLYEVLGVERRATSQEIRKAYHKLALKLHPDKNQDDKEAKDKFQQLQKVISILGDEEKRAVYDQTGSIDDADIPGDAFENLRDFFRDMYKKVNEADIEEFEANYRGSESEKKDLLELFNKFKGKMNRLFCSMLCSDPKLDSHRFKDMLDEAIAAGEVKSSKAYEKWANKISETKPPTSPLRKRKKKKSAAKDSETDLCLMIAKRQEERKGKVDSMFSSLISRYGGDAEAEPTEEEFEAAQRRIESKRKPSKKSRGK.

Disordered stretches follow at residues 1 to 30 (MGRK…ETSL), 196 to 221 (NKIS…AKDS), and 252 to 284 (GGDA…SRGK). The Nuclear localization signal signature appears at 3–6 (RKKK). Positions 29 to 94 (SLYEVLGVER…EKRAVYDQTG (66 aa)) constitute a J domain. The Nuclear localization signal motif lies at 209 to 215 (RKRKKKK). Acidic residues predominate over residues 255-265 (AEAEPTEEEFE). A compositionally biased stretch (basic and acidic residues) spans 266 to 275 (AAQRRIESKR).

The protein belongs to the DnaJ family. C/III subfamily. Highly expressed in leaves, flowers and siliques, and to lower extent in roots.

The protein resides in the nucleus. Functionally, plays a continuous role in plant development probably in the structural organization of compartments. This Arabidopsis thaliana (Mouse-ear cress) protein is Chaperone protein dnaJ 6 (ATJ6).